The following is a 952-amino-acid chain: uncharacterized protein (952 aa).

The region spanning Met1–Arg141 is the CheB-type methylesterase domain. The CheR-type methyltransferase domain maps to Val168 to Leu440. A compositionally biased stretch (polar residues) spans His923–Gly935. Residues His923 to Ala952 are disordered. Gly residues predominate over residues Gly936–Ala952.

This is an uncharacterized protein from Rhodobacter capsulatus (Rhodopseudomonas capsulata).